The primary structure comprises 223 residues: Urease accessory protein UreF (223 aa).

Belongs to the UreF family. UreD, UreF and UreG form a complex that acts as a GTP-hydrolysis-dependent molecular chaperone, activating the urease apoprotein by helping to assemble the nickel containing metallocenter of UreC. The UreE protein probably delivers the nickel.

The protein localises to the cytoplasm. Its function is as follows. Required for maturation of urease via the functional incorporation of the urease nickel metallocenter. The polypeptide is Urease accessory protein UreF (Rhizobium meliloti (strain 1021) (Ensifer meliloti)).